A 106-amino-acid chain; its full sequence is uncharacterized protein (106 aa).

It is found in the mitochondrion. This is an uncharacterized protein from Arabidopsis thaliana (Mouse-ear cress).